Consider the following 157-residue polypeptide: 2-C-methyl-D-erythritol 2,4-cyclodiphosphate synthase (157 aa).

The a divalent metal cation site is built by Asp8 and His10. 4-CDP-2-C-methyl-D-erythritol 2-phosphate-binding positions include 8 to 10 (DVH) and 34 to 35 (HS). His42 serves as a coordination point for a divalent metal cation. 4-CDP-2-C-methyl-D-erythritol 2-phosphate is bound by residues 56 to 58 (DIG), 61 to 65 (FPDTD), 100 to 106 (AQAPKMA), 132 to 135 (TTTE), Phe139, and Arg142.

Belongs to the IspF family. In terms of assembly, homotrimer. A divalent metal cation serves as cofactor.

It catalyses the reaction 4-CDP-2-C-methyl-D-erythritol 2-phosphate = 2-C-methyl-D-erythritol 2,4-cyclic diphosphate + CMP. It participates in isoprenoid biosynthesis; isopentenyl diphosphate biosynthesis via DXP pathway; isopentenyl diphosphate from 1-deoxy-D-xylulose 5-phosphate: step 4/6. In terms of biological role, involved in the biosynthesis of isopentenyl diphosphate (IPP) and dimethylallyl diphosphate (DMAPP), two major building blocks of isoprenoid compounds. Catalyzes the conversion of 4-diphosphocytidyl-2-C-methyl-D-erythritol 2-phosphate (CDP-ME2P) to 2-C-methyl-D-erythritol 2,4-cyclodiphosphate (ME-CPP) with a corresponding release of cytidine 5-monophosphate (CMP). The polypeptide is 2-C-methyl-D-erythritol 2,4-cyclodiphosphate synthase (Pseudomonas putida (strain ATCC 700007 / DSM 6899 / JCM 31910 / BCRC 17059 / LMG 24140 / F1)).